We begin with the raw amino-acid sequence, 108 residues long: MERDKGVAPIVVENVAYNEQVVSFVRNLTSSFFGCAAGILGLTSYEGLALYVLGYFFVSFLLFALKMRGNLTKYYQPGYKFWIAKILDGAPSYVLTWTLFYSLVYVYE.

The next 3 membrane-spanning stretches (helical) occupy residues 21–41 (VVSFVRNLTSSFFGCAAGILG), 45–65 (YEGLALYVLGYFFVSFLLFAL), and 86–106 (ILDGAPSYVLTWTLFYSLVYV).

This sequence belongs to the EMC6 family.

It localises to the endoplasmic reticulum membrane. This chain is ER membrane protein complex subunit 6, found in Schizosaccharomyces pombe (strain 972 / ATCC 24843) (Fission yeast).